The following is a 954-amino-acid chain: Glycine dehydrogenase (decarboxylating) (954 aa).

Position 704 is an N6-(pyridoxal phosphate)lysine (Lys704).

It belongs to the GcvP family. As to quaternary structure, the glycine cleavage system is composed of four proteins: P, T, L and H. The cofactor is pyridoxal 5'-phosphate.

The catalysed reaction is N(6)-[(R)-lipoyl]-L-lysyl-[glycine-cleavage complex H protein] + glycine + H(+) = N(6)-[(R)-S(8)-aminomethyldihydrolipoyl]-L-lysyl-[glycine-cleavage complex H protein] + CO2. In terms of biological role, the glycine cleavage system catalyzes the degradation of glycine. The P protein binds the alpha-amino group of glycine through its pyridoxal phosphate cofactor; CO(2) is released and the remaining methylamine moiety is then transferred to the lipoamide cofactor of the H protein. This is Glycine dehydrogenase (decarboxylating) from Allorhizobium ampelinum (strain ATCC BAA-846 / DSM 112012 / S4) (Agrobacterium vitis (strain S4)).